The primary structure comprises 117 residues: Large ribosomal subunit protein uL24 (117 aa).

A compositionally biased stretch (basic residues) spans 1–10; the sequence is MSKQPRKQRK. Positions 1-28 are disordered; the sequence is MSKQPRKQRKALYTAPLHKRHNSMSVHL.

Belongs to the universal ribosomal protein uL24 family. As to quaternary structure, part of the 50S ribosomal subunit.

One of two assembly initiator proteins, it binds directly to the 5'-end of the 23S rRNA, where it nucleates assembly of the 50S subunit. In terms of biological role, located at the polypeptide exit tunnel on the outside of the subunit. The chain is Large ribosomal subunit protein uL24 from Methanosphaera stadtmanae (strain ATCC 43021 / DSM 3091 / JCM 11832 / MCB-3).